Consider the following 83-residue polypeptide: Cytochrome b559 subunit alpha (83 aa).

Residues Val-21–Trp-35 form a helical membrane-spanning segment. A heme-binding site is contributed by His-23.

This sequence belongs to the PsbE/PsbF family. As to quaternary structure, heterodimer of an alpha subunit and a beta subunit. PSII is composed of 1 copy each of membrane proteins PsbA, PsbB, PsbC, PsbD, PsbE, PsbF, PsbH, PsbI, PsbJ, PsbK, PsbL, PsbM, PsbT, PsbX, PsbY, PsbZ, Psb30/Ycf12, at least 3 peripheral proteins of the oxygen-evolving complex and a large number of cofactors. It forms dimeric complexes. Requires heme b as cofactor.

It localises to the plastid. The protein resides in the chloroplast thylakoid membrane. Its function is as follows. This b-type cytochrome is tightly associated with the reaction center of photosystem II (PSII). PSII is a light-driven water:plastoquinone oxidoreductase that uses light energy to abstract electrons from H(2)O, generating O(2) and a proton gradient subsequently used for ATP formation. It consists of a core antenna complex that captures photons, and an electron transfer chain that converts photonic excitation into a charge separation. This Liriodendron tulipifera (Tuliptree) protein is Cytochrome b559 subunit alpha.